Reading from the N-terminus, the 276-residue chain is 3-methyl-2-oxobutanoate hydroxymethyltransferase (276 aa).

Residues D50 and D89 each coordinate Mg(2+). 3-methyl-2-oxobutanoate is bound by residues 50-51 (DS), D89, and K119. Position 121 (E121) interacts with Mg(2+). The active-site Proton acceptor is E188.

It belongs to the PanB family. In terms of assembly, homodecamer; pentamer of dimers. The cofactor is Mg(2+).

The protein localises to the cytoplasm. The enzyme catalyses 3-methyl-2-oxobutanoate + (6R)-5,10-methylene-5,6,7,8-tetrahydrofolate + H2O = 2-dehydropantoate + (6S)-5,6,7,8-tetrahydrofolate. It participates in cofactor biosynthesis; (R)-pantothenate biosynthesis; (R)-pantoate from 3-methyl-2-oxobutanoate: step 1/2. Its function is as follows. Catalyzes the reversible reaction in which hydroxymethyl group from 5,10-methylenetetrahydrofolate is transferred onto alpha-ketoisovalerate to form ketopantoate. The sequence is that of 3-methyl-2-oxobutanoate hydroxymethyltransferase from Paracoccus denitrificans (strain Pd 1222).